A 535-amino-acid polypeptide reads, in one-letter code: Probable deoxycholate-binding periplasmic protein YgiS (535 aa).

The signal sequence occupies residues 1 to 20 (MYTRNLLWLVSLVSAAPLYA).

The protein belongs to the bacterial solute-binding protein 5 family.

It localises to the periplasm. In terms of biological role, probably part of a deoxycholate transport system. Its expression in the presence of deoxycholate in a ygiS deletion mutant increases intracellular deoxycholate levels and decreases cell growth; higher expression in the presence of deoxycholate inhibits cell growth completely. Bile acid detergents such as deoxycholate are important for host defense against bacterial growth in the gall bladder and duodenum. The sequence is that of Probable deoxycholate-binding periplasmic protein YgiS (ygiS) from Escherichia coli (strain K12).